We begin with the raw amino-acid sequence, 591 residues long: MKKISLPKIGIRPVIDGRRMGVRESLEEQTMNMAKATAALITEKMRHACGAQVECVIADTCIAGMAESAACEEKFSSQNVGVTITVTPCWCYGSETIDMDPMRPKAIWGFNGTERPGAVYLAAALAAHSQKGIPAFSIYGHDVQDADDTSIPADVEEKLLRFARAGLAVASMKGKSYLSVGGVSMGIAGSIVDHNFFESWLGMKVQAVDMTELRRRIDQKIYDEAELEMALAWADKNFRYGEDQNASQYKRNEAQNRAVLKESLLMAMCIRDMMQGNKTLADKGLVEESLGYNAIAAGFQGQRHWTDQYPNGDTAEALLNSSFDWNGVREPFVVATENDSLNGVAMLFGHQLTGTAQIFADVRTYWSPEAVERVTGQALSGLAEHGIIHLINSGSAALDGACKQRDSEGKPTMKPHWEISQQEADACLAATEWCPAIHEYFRGGGYSSRFLTEGGVPFTMTRVNIIKGLGPVLQIAEGWSVELPKAMHDQLDARTNSTWPTTWFAPRLTGKGPFTDVYSVMANWGANHGVLTIGHVGADFITLAAMLRIPVCMHNVEEAKIYRPSAWAAHGMDIEGQDYRACQNYGPLYKR.

Catalysis depends on proton acceptor residues E337 and D361. Positions 337, 361, and 528 each coordinate Mn(2+).

Belongs to the L-fucose isomerase family. Homohexamer. It depends on Mn(2+) as a cofactor.

The protein resides in the cytoplasm. The enzyme catalyses L-fucose = L-fuculose. The protein operates within carbohydrate degradation; L-fucose degradation; L-lactaldehyde and glycerone phosphate from L-fucose: step 1/3. Converts the aldose L-fucose into the corresponding ketose L-fuculose. This Salmonella paratyphi B (strain ATCC BAA-1250 / SPB7) protein is L-fucose isomerase.